A 351-amino-acid polypeptide reads, in one-letter code: Putative glycosyltransferase 45 (351 aa).

It belongs to the glycosyltransferase group 1 family.

This is Putative glycosyltransferase 45 (SIFV0045) from Sulfolobus islandicus filamentous virus (isolate Iceland/Hveragerdi) (SIFV).